We begin with the raw amino-acid sequence, 637 residues long: 1-deoxy-D-xylulose-5-phosphate synthase (637 aa).

Thiamine diphosphate-binding positions include His-72 and 113-115 (GHA). Asp-144 provides a ligand contact to Mg(2+). Thiamine diphosphate-binding positions include 145 to 146 (GA), Asn-174, Tyr-287, and Glu-370. Asn-174 contacts Mg(2+).

This sequence belongs to the transketolase family. DXPS subfamily. In terms of assembly, homodimer. Requires Mg(2+) as cofactor. Thiamine diphosphate serves as cofactor.

It catalyses the reaction D-glyceraldehyde 3-phosphate + pyruvate + H(+) = 1-deoxy-D-xylulose 5-phosphate + CO2. It participates in metabolic intermediate biosynthesis; 1-deoxy-D-xylulose 5-phosphate biosynthesis; 1-deoxy-D-xylulose 5-phosphate from D-glyceraldehyde 3-phosphate and pyruvate: step 1/1. Catalyzes the acyloin condensation reaction between C atoms 2 and 3 of pyruvate and glyceraldehyde 3-phosphate to yield 1-deoxy-D-xylulose-5-phosphate (DXP). The protein is 1-deoxy-D-xylulose-5-phosphate synthase of Prochlorococcus marinus subsp. pastoris (strain CCMP1986 / NIES-2087 / MED4).